The following is a 438-amino-acid chain: Actin-like protein 7A (438 aa).

A required for interaction with TES region spans residues 36–56 (ASLKDGPAKRAVWVRRDHSEP).

It belongs to the actin family. Interacts (via N-terminus) with TES (via LIM domain 2). Heterodimer with TES; the heterodimer interacts with ENAH to form a heterotrimer. Interacts with ACTL9. Interacts with CYLC1; the interaction may be relevant for proper acrosome attachment to the nuclear envelope.

It is found in the cytoplasm. The protein resides in the cytoskeleton. It localises to the golgi apparatus. Its subcellular location is the nucleus. Essential for normal spermatogenesis and male fertility. Required for normal sperm head morphology, acroplaxome formation, acrosome attachment, and acrosome granule stability. May anchor and stabilize acrosomal adherence to the acroplaxome at least in part by facilitating the presence of F-actin in the subacrosomal space. May play an important role in formation and fusion of Golgi-derived vesicles during acrosome biogenesis. In Bos taurus (Bovine), this protein is Actin-like protein 7A (ACTL7A).